A 459-amino-acid polypeptide reads, in one-letter code: Cysteine--tRNA ligase (459 aa).

Cys-28 is a Zn(2+) binding site. Residues 30 to 40 (ITIYDLCHIGH) carry the 'HIGH' region motif. Residues Cys-209, His-234, and Glu-238 each contribute to the Zn(2+) site. The 'KMSKS' region motif lies at 266 to 270 (KMSKS). Lys-269 contacts ATP.

The protein belongs to the class-I aminoacyl-tRNA synthetase family. As to quaternary structure, monomer. Zn(2+) serves as cofactor.

It localises to the cytoplasm. It carries out the reaction tRNA(Cys) + L-cysteine + ATP = L-cysteinyl-tRNA(Cys) + AMP + diphosphate. The polypeptide is Cysteine--tRNA ligase (Shewanella woodyi (strain ATCC 51908 / MS32)).